The chain runs to 559 residues: Beta-glucuronidase (559 aa).

The signal sequence occupies residues 1–19 (MKRILGLIAYASVPTVINA). N-linked (GlcNAc...) asparagine glycosylation is found at asparagine 53, asparagine 91, asparagine 99, and asparagine 143. Catalysis depends on glutamate 194, which acts as the Proton donor. Residues asparagine 203, asparagine 222, and asparagine 280 are each glycosylated (N-linked (GlcNAc...) asparagine). Residue glutamate 312 is the Nucleophile of the active site. 5 N-linked (GlcNAc...) asparagine glycosylation sites follow: asparagine 427, asparagine 440, asparagine 465, asparagine 491, and asparagine 520.

This sequence belongs to the glycosyl hydrolase 79 family.

The protein resides in the secreted. It carries out the reaction a beta-D-glucuronoside + H2O = D-glucuronate + an alcohol. Its function is as follows. Beta-glucuronidase that hydrolyzes beta-glucuronosyl and 4-O-methyl-beta-glucuronosyl residues of arabinogalactan-protein. Hydrolyzed heparan sulfate only very weakly. Has no activity on xylan from birchwood. Able to catalyze the transglycosylation of glucuronic acid (GlcA) residues from p-nitrophenyl-beta-glucuronic acid (PNP beta-GlcA) to various monosaccharide acceptors such as glucose, galactose and xylose. In Neurospora crassa (strain ATCC 24698 / 74-OR23-1A / CBS 708.71 / DSM 1257 / FGSC 987), this protein is Beta-glucuronidase.